The primary structure comprises 789 residues: Probable phosphoketolase (789 aa).

The protein belongs to the XFP family. Requires thiamine diphosphate as cofactor.

In Brucella abortus (strain 2308), this protein is Probable phosphoketolase.